Here is a 341-residue protein sequence, read N- to C-terminus: Pectate trisaccharide-lyase (341 aa).

Residues 1–27 (MKKLISIIFIFVLGVVGSLTAAVSAEA) form the signal peptide. A propeptide spanning residues 28 to 39 (ASALNSGKVNPL) is cleaved from the precursor. PbH1 repeat units follow at residues 131–156 (ANNI…GIEG) and 158–186 (SKNI…FDVK). Asp-150, Asp-180, and Asp-184 together coordinate Ca(2+). Arg-233 is an active-site residue. PbH1 repeat units follow at residues 262 to 283 (GARI…VSWY) and 287 to 322 (PGYW…SLDN).

This sequence belongs to the polysaccharide lyase 1 family. Ca(2+) is required as a cofactor.

It is found in the secreted. The catalysed reaction is eliminative cleavage of unsaturated trigalacturonate as the major product from the reducing end of polygalacturonic acid/pectate.. Its function is as follows. Cleaves unsaturated oligo-galacturonides from pectin. The major product is trigalacturonate; digalacturonate and tetragalacturonate are also produced. Activity on methylated pectins decreases with an increasing degree of methylation. This Bacillus licheniformis (strain ATCC 14580 / DSM 13 / JCM 2505 / CCUG 7422 / NBRC 12200 / NCIMB 9375 / NCTC 10341 / NRRL NRS-1264 / Gibson 46) protein is Pectate trisaccharide-lyase.